A 164-amino-acid chain; its full sequence is Ubiquitin-conjugating enzyme E2 2 (164 aa).

One can recognise a UBC core domain in the interval 4–150 (PARRRLMRDF…VKETVEKSWE (147 aa)). Residue Cys88 is the Glycyl thioester intermediate of the active site.

This sequence belongs to the ubiquitin-conjugating enzyme family.

Its subcellular location is the cytoplasm. It is found in the nucleus. It carries out the reaction S-ubiquitinyl-[E1 ubiquitin-activating enzyme]-L-cysteine + [E2 ubiquitin-conjugating enzyme]-L-cysteine = [E1 ubiquitin-activating enzyme]-L-cysteine + S-ubiquitinyl-[E2 ubiquitin-conjugating enzyme]-L-cysteine.. Its pathway is protein modification; protein ubiquitination. Its function is as follows. Catalyzes the covalent attachment of ubiquitin to other proteins. Plays a role in transcription regulation by catalyzing the monoubiquitination of histone H2B to form H2BK123ub1. H2BK123ub1 gives a specific tag for epigenetic transcriptional activation and is also a prerequisite for H3K4me and H3K79me formation. Also involved in postreplication repair of UV-damaged DNA, in N-end rule-dependent protein degradation and in sporulation. The sequence is that of Ubiquitin-conjugating enzyme E2 2 (UBC2) from Kluyveromyces lactis (strain ATCC 8585 / CBS 2359 / DSM 70799 / NBRC 1267 / NRRL Y-1140 / WM37) (Yeast).